The chain runs to 378 residues: uncharacterized protein (378 aa).

Residues Gly-208–Val-317 form the Guanylate cyclase domain.

Belongs to the adenylyl cyclase class-4/guanylyl cyclase family.

This is an uncharacterized protein from Mycobacterium bovis (strain ATCC BAA-935 / AF2122/97).